A 163-amino-acid polypeptide reads, in one-letter code: Protein LOL5 (163 aa).

2 stretches are compositionally biased toward polar residues: residues 1 to 25 (MSQLPLASQATTTDLVSTTAMQPQS) and 33 to 44 (LQPQHPPSSTAH). The interval 1–51 (MSQLPLASQATTTDLVSTTAMQPQSEGIVDESLQPQHPPSSTAHDSPCLQD) is disordered. Putative zinc finger stretches follow at residues 70–100 (QMVCGSCRILLAYFRGAGYVHCTCCQTMNYV) and 108–138 (KVHCGHCATLLMYPFGAPAVKCSLCLFVTEI).

The protein localises to the nucleus. In terms of biological role, involved in plant growth and disease resistance. The polypeptide is Protein LOL5 (LOL5) (Oryza sativa subsp. japonica (Rice)).